The chain runs to 602 residues: Arginine--tRNA ligase (602 aa).

The 'HIGH' region signature appears at 132-142; that stretch reads ANPTGPLHVGH.

This sequence belongs to the class-I aminoacyl-tRNA synthetase family. As to quaternary structure, monomer.

The protein localises to the cytoplasm. The catalysed reaction is tRNA(Arg) + L-arginine + ATP = L-arginyl-tRNA(Arg) + AMP + diphosphate. The chain is Arginine--tRNA ligase from Cupriavidus metallidurans (strain ATCC 43123 / DSM 2839 / NBRC 102507 / CH34) (Ralstonia metallidurans).